The sequence spans 156 residues: dCTP deaminase (156 aa).

DCTP contacts are provided by residues 79–84 (RSTFAR), D95, Q124, and Y138.

This sequence belongs to the dCTP deaminase family. As to quaternary structure, homotrimer.

The catalysed reaction is dCTP + H2O + H(+) = dUTP + NH4(+). The protein operates within pyrimidine metabolism; dUMP biosynthesis; dUMP from dCTP (dUTP route): step 1/2. In terms of biological role, catalyzes the deamination of dCTP to dUTP. The polypeptide is dCTP deaminase (Thermococcus sibiricus (strain DSM 12597 / MM 739)).